A 185-amino-acid polypeptide reads, in one-letter code: Elongation factor P (185 aa).

The protein belongs to the elongation factor P family.

Its subcellular location is the cytoplasm. It functions in the pathway protein biosynthesis; polypeptide chain elongation. In terms of biological role, involved in peptide bond synthesis. Stimulates efficient translation and peptide-bond synthesis on native or reconstituted 70S ribosomes in vitro. Probably functions indirectly by altering the affinity of the ribosome for aminoacyl-tRNA, thus increasing their reactivity as acceptors for peptidyl transferase. In Dictyoglomus turgidum (strain DSM 6724 / Z-1310), this protein is Elongation factor P.